Reading from the N-terminus, the 269-residue chain is Subtilisin BL (269 aa).

Glutamine 2 provides a ligand contact to Ca(2+). One can recognise a Peptidase S8 domain in the interval 5-268; sequence PWGISRVQAP…SGLVNAEAAT (264 aa). Catalysis depends on aspartate 32, which acts as the Charge relay system. Aspartate 40 serves as a coordination point for Ca(2+). Histidine 62 functions as the Charge relay system in the catalytic mechanism. The Ca(2+) site is built by leucine 73, asparagine 75, isoleucine 77, valine 79, alanine 163, tyrosine 165, and alanine 168. Serine 215 serves as the catalytic Charge relay system.

The protein belongs to the peptidase S8 family. The cofactor is Ca(2+).

Its subcellular location is the secreted. It carries out the reaction Hydrolysis of proteins with broad specificity for peptide bonds, and a preference for a large uncharged residue in P1. Hydrolyzes peptide amides.. Subtilisin is an extracellular alkaline serine protease, it catalyzes the hydrolysis of proteins and peptide amides. In Lederbergia lenta (Bacillus lentus), this protein is Subtilisin BL.